We begin with the raw amino-acid sequence, 430 residues long: Histidine--tRNA ligase (430 aa).

It belongs to the class-II aminoacyl-tRNA synthetase family. Homodimer.

The protein localises to the cytoplasm. It carries out the reaction tRNA(His) + L-histidine + ATP = L-histidyl-tRNA(His) + AMP + diphosphate + H(+). In Lactococcus lactis subsp. lactis (strain IL1403) (Streptococcus lactis), this protein is Histidine--tRNA ligase.